The following is a 121-amino-acid chain: LOB domain-containing protein 23 (121 aa).

The 102-residue stretch at 4 to 105 (KRCAACKYLR…NELAKTQAEI (102 aa)) folds into the LOB domain.

It belongs to the LOB domain-containing protein family.

The sequence is that of LOB domain-containing protein 23 (LBD23) from Arabidopsis thaliana (Mouse-ear cress).